Consider the following 83-residue polypeptide: Cytochrome b559 subunit alpha (83 aa).

Residues 21–35 (VIHSITIPSLFVAGW) form a helical membrane-spanning segment. H23 is a heme binding site.

The protein belongs to the PsbE/PsbF family. In terms of assembly, heterodimer of an alpha subunit and a beta subunit. PSII is composed of 1 copy each of membrane proteins PsbA, PsbB, PsbC, PsbD, PsbE, PsbF, PsbH, PsbI, PsbJ, PsbK, PsbL, PsbM, PsbT, PsbX, PsbY, PsbZ, Psb30/Ycf12, at least 3 peripheral proteins of the oxygen-evolving complex and a large number of cofactors. It forms dimeric complexes. Heme b serves as cofactor.

It is found in the plastid. It localises to the chloroplast thylakoid membrane. Its function is as follows. This b-type cytochrome is tightly associated with the reaction center of photosystem II (PSII). PSII is a light-driven water:plastoquinone oxidoreductase that uses light energy to abstract electrons from H(2)O, generating O(2) and a proton gradient subsequently used for ATP formation. It consists of a core antenna complex that captures photons, and an electron transfer chain that converts photonic excitation into a charge separation. This chain is Cytochrome b559 subunit alpha, found in Nephroselmis olivacea (Green alga).